We begin with the raw amino-acid sequence, 397 residues long: Keratinocyte differentiation factor 1 (397 aa).

Residues 1 to 16 are compositionally biased toward pro residues; sequence MPRPGQPRPSSGPPRL. 3 disordered regions span residues 1–67, 130–158, and 192–214; these read MPRP…SAEP, EHNGVPPSPDRAPPSRRDGQRLKTSMGSS, and LAEPPPTRHSLPSTFTNSPRGSE. Over residues 44 to 55 the composition is skewed to basic and acidic residues; the sequence is RPDPKDPGHHGP. A compositionally biased stretch (polar residues) spans 201–211; that stretch reads SLPSTFTNSPR. Ser-218 is modified (phosphoserine). 2 disordered regions span residues 304–339 and 361–392; these read ISTRKSRSRPQTSEGRSARSTAPAAAPDSGHETMLG and ARKLRPYGAPGYPASQDSSFQGTDTDSSGAPL. A compositionally biased stretch (low complexity) spans 321-330; sequence ARSTAPAAAP. The segment covering 375-388 has biased composition (polar residues); it reads SQDSSFQGTDTDSS.

It localises to the cytoplasm. The protein resides in the cell junction. Functionally, plays a role in the regulation of the epidermis formation during early development. Required both as an inhibitor of basal cell proliferation and a promoter of differentiation of basal progenitor cell progeny. This is Keratinocyte differentiation factor 1 (Kdf1) from Mus musculus (Mouse).